A 145-amino-acid polypeptide reads, in one-letter code: UPF0102 protein BAV3162 (145 aa).

Belongs to the UPF0102 family.

This Bordetella avium (strain 197N) protein is UPF0102 protein BAV3162.